The primary structure comprises 216 residues: Adenylate kinase (216 aa).

10–15 (GAGKGT) contributes to the ATP binding site. Residues 30–59 (STGDMLRAAVKAGTKLGQQVQGIMAAGKLV) are NMP. AMP is bound by residues Thr-31, Arg-36, 57-59 (KLV), 85-88 (GFPR), and Gln-92. The LID stretch occupies residues 122–159 (GRRVHMPSGRIYHLKFNPPKITDKDDMTGESLTLRKDD). Residues Arg-123 and 132–133 (IY) contribute to the ATP site. Arg-156 and Arg-167 together coordinate AMP. Position 200 (Arg-200) interacts with ATP.

This sequence belongs to the adenylate kinase family. As to quaternary structure, monomer.

It localises to the cytoplasm. The enzyme catalyses AMP + ATP = 2 ADP. It functions in the pathway purine metabolism; AMP biosynthesis via salvage pathway; AMP from ADP: step 1/1. In terms of biological role, catalyzes the reversible transfer of the terminal phosphate group between ATP and AMP. Plays an important role in cellular energy homeostasis and in adenine nucleotide metabolism. This chain is Adenylate kinase, found in Hamiltonella defensa subsp. Acyrthosiphon pisum (strain 5AT).